The chain runs to 475 residues: UDP-N-acetylmuramate--L-alanine ligase (475 aa).

Position 114 to 120 (114 to 120 (GTHGKTT)) interacts with ATP.

It belongs to the MurCDEF family.

It is found in the cytoplasm. The enzyme catalyses UDP-N-acetyl-alpha-D-muramate + L-alanine + ATP = UDP-N-acetyl-alpha-D-muramoyl-L-alanine + ADP + phosphate + H(+). The protein operates within cell wall biogenesis; peptidoglycan biosynthesis. Its function is as follows. Cell wall formation. This is UDP-N-acetylmuramate--L-alanine ligase from Bartonella henselae (strain ATCC 49882 / DSM 28221 / CCUG 30454 / Houston 1) (Rochalimaea henselae).